Reading from the N-terminus, the 147-residue chain is Large ribosomal subunit protein uL15 (147 aa).

The interval 1–42 (MTIKLHHLRPAPGAKTDKTRVGRGEGSKGKTAGRGTKGTKAR) is disordered. The span at 15–28 (KTDKTRVGRGEGSK) shows a compositional bias: basic and acidic residues.

This sequence belongs to the universal ribosomal protein uL15 family. As to quaternary structure, part of the 50S ribosomal subunit.

Functionally, binds to the 23S rRNA. In Nocardia farcinica (strain IFM 10152), this protein is Large ribosomal subunit protein uL15.